A 158-amino-acid chain; its full sequence is MIGKNIKSLRKTHDLTQLEFARIVGISRNSLSRYENGTSSVSTELIDIICQKFNVSYVDIVGEDKMLNPVEDYELTLKIEIVKERGANLLSRLYRYQDSQGISIDDESNPWILMSDDLSDLIHTNIYLVETFDEIERYSGYLDGIERMLEISEKRMVA.

Residues I6–I60 form the HTH cro/C1-type domain. Positions Q17 to N36 form a DNA-binding region, H-T-H motif.

As to quaternary structure, probably a homodimer, forms a PezA(2)PezT(2) heterotetramer. The heterotetramer is much more stable than either of the proteins alone, and a specific mechanism may be necessary to liberate the toxin.

In terms of biological role, antitoxin component of a type II toxin-antitoxin (TA) system. Upon expression in E.coli neutralizes the toxic effect of cognate toxin PezT. Represses transcription of its own operon, PezT acts as a corepressor, considerably increasing repression. This Streptococcus pneumoniae serotype 4 (strain ATCC BAA-334 / TIGR4) protein is Antitoxin PezA (pezA).